We begin with the raw amino-acid sequence, 328 residues long: MTHSLRVIFAGTPEFAAAALAAIHEAGFPVPLVLTQPDRPAGRGMKLQASAVKRYALEHGITVAQPPSLRRAGKHPAEAAAALDLLHATPHDVMVVAAYGLLLPQEVLDLPRYGCINIHASLLPRWRGAAPIHRAIEAGDAETGVTLMQMDAGLDTGAMLHDARVAIAPDDTTATLHDKLAAAGATLIVDALVELERAGALAATPQPDDGITYAEKIGKHEAALDWRKPATVLARQVRAFDPFPGGAGTLDGVTLKLWAADAMPARGDAAPGTIVDAGADGVVIACGEGALRVTQLQKPGGKRLPAREFLAGAPLAVGQRFSPPDTAA.

(6S)-5,6,7,8-tetrahydrofolate is bound at residue 121–124 (SLLP).

This sequence belongs to the Fmt family.

It carries out the reaction L-methionyl-tRNA(fMet) + (6R)-10-formyltetrahydrofolate = N-formyl-L-methionyl-tRNA(fMet) + (6S)-5,6,7,8-tetrahydrofolate + H(+). Attaches a formyl group to the free amino group of methionyl-tRNA(fMet). The formyl group appears to play a dual role in the initiator identity of N-formylmethionyl-tRNA by promoting its recognition by IF2 and preventing the misappropriation of this tRNA by the elongation apparatus. This is Methionyl-tRNA formyltransferase from Burkholderia thailandensis (strain ATCC 700388 / DSM 13276 / CCUG 48851 / CIP 106301 / E264).